Reading from the N-terminus, the 123-residue chain is Small ribosomal subunit protein uS13 (123 aa).

A disordered region spans residues 97–123 (PVRGQKTKTNARTRKGPKKTVGRKKKK). Basic residues predominate over residues 101 to 123 (QKTKTNARTRKGPKKTVGRKKKK).

It belongs to the universal ribosomal protein uS13 family. In terms of assembly, part of the 30S ribosomal subunit. Forms a loose heterodimer with protein S19. Forms two bridges to the 50S subunit in the 70S ribosome.

Its function is as follows. Located at the top of the head of the 30S subunit, it contacts several helices of the 16S rRNA. In the 70S ribosome it contacts the 23S rRNA (bridge B1a) and protein L5 of the 50S subunit (bridge B1b), connecting the 2 subunits; these bridges are implicated in subunit movement. Contacts the tRNAs in the A and P-sites. The chain is Small ribosomal subunit protein uS13 from Alkaliphilus oremlandii (strain OhILAs) (Clostridium oremlandii (strain OhILAs)).